The following is a 109-amino-acid chain: Protein GOLVEN 5 (109 aa).

A signal peptide spans 1–24 (MTNITSSFLCLLILLLFCLSFGYS). The propeptide occupies 25–96 (LHGDKDEVLS…EEDDLVAYTA (72 aa)). A disordered region spans residues 54 to 88 (KKAQVRGRSGQEFSKETTKMMMKKTTKKETNVEEE). Position 98 is a sulfotyrosine (Tyr98). Pro106 carries the hydroxyproline modification.

Belongs to the RGF family. In terms of assembly, binds to LRR receptor-like serine/threonine-protein kinases RGI1, RGI2 and RGI3 to trigger their dimerization with SERK proteins and subsequent signaling. Expressed in root tips.

It is found in the secreted. Signaling peptide (root growth factor) that maintains the postembryonic root stem cell niche in a PIN2-traffic dependent manner. Root growth factor that regulates the pattern of root growth and lateral root development by modulating the length and the number of cortical cells in the root apical meristem (RAM), and the anticlinal asymmetric cell divisions in lateral root initiation cells. Influences the longitudinal growth rate in the primary root in response to phosphate ion (Pi)-deprivation. In Arabidopsis thaliana (Mouse-ear cress), this protein is Protein GOLVEN 5.